The following is a 176-amino-acid chain: Prion-like protein doppel (176 aa).

An N-terminal signal peptide occupies residues 1 to 25 (MRKHLSWWWLATVCMLLFSHLSAVQ). Positions 27 to 50 (RGIKHRIKWNRKALPSTAQITEAQ) are flexible tail. Thr43 is a glycosylation site (O-linked (GalNAc...) threonine). Residues 51–152 (VAENRPGAFI…KHCEFWLERG (102 aa)) are globular. Intrachain disulfides connect Cys94-Cys145 and Cys108-Cys140. N-linked (GlcNAc...) asparagine glycans are attached at residues Asn98 and Asn110. The segment at 122–139 (KPDNKLHQQVLWRLVQEL) is cu(2+) binding. A lipid anchor (GPI-anchor amidated glycine) is attached at Gly152. Positions 153–176 (AGLRVTMHQPVLLCLLALIWLTVK) are cleaved as a propeptide — removed in mature form.

This sequence belongs to the prion family. In terms of processing, N-glycosylated. N-glycosylated at two distinct sites. O-glycosylated. In terms of tissue distribution, expressed in testis, in Sertoli cells, ejaculated spermatozoa and in seminal fluid (at protein level).

Its subcellular location is the cell membrane. In terms of biological role, required for normal acrosome reaction and for normal male fertility. Can bind Cu(2+). In Homo sapiens (Human), this protein is Prion-like protein doppel (PRND).